The chain runs to 303 residues: Epimerase family protein YfhF (303 aa).

The protein belongs to the NAD(P)-dependent epimerase/dehydratase family. SDR39U1 subfamily.

The protein is Epimerase family protein YfhF (yfhF) of Bacillus subtilis (strain 168).